A 160-amino-acid polypeptide reads, in one-letter code: Large ribosomal subunit protein uL22c (160 aa).

The protein belongs to the universal ribosomal protein uL22 family. Part of the 50S ribosomal subunit.

It is found in the plastid. Its subcellular location is the chloroplast. Functionally, this protein binds specifically to 23S rRNA. Its function is as follows. The globular domain of the protein is located near the polypeptide exit tunnel on the outside of the subunit, while an extended beta-hairpin is found that lines the wall of the exit tunnel in the center of the 70S ribosome. This chain is Large ribosomal subunit protein uL22c (rpl22), found in Nasturtium officinale (Watercress).